Consider the following 310-residue polypeptide: Putative S-adenosyl-L-methionine-dependent methyltransferase MUL_2766 (310 aa).

Residues D131 and 160–161 (DL) contribute to the S-adenosyl-L-methionine site.

Belongs to the UPF0677 family.

In terms of biological role, exhibits S-adenosyl-L-methionine-dependent methyltransferase activity. The polypeptide is Putative S-adenosyl-L-methionine-dependent methyltransferase MUL_2766 (Mycobacterium ulcerans (strain Agy99)).